The sequence spans 286 residues: Phosphoribosylaminoimidazole-succinocarboxamide synthase (286 aa).

This sequence belongs to the SAICAR synthetase family.

The catalysed reaction is 5-amino-1-(5-phospho-D-ribosyl)imidazole-4-carboxylate + L-aspartate + ATP = (2S)-2-[5-amino-1-(5-phospho-beta-D-ribosyl)imidazole-4-carboxamido]succinate + ADP + phosphate + 2 H(+). It participates in purine metabolism; IMP biosynthesis via de novo pathway; 5-amino-1-(5-phospho-D-ribosyl)imidazole-4-carboxamide from 5-amino-1-(5-phospho-D-ribosyl)imidazole-4-carboxylate: step 1/2. The protein is Phosphoribosylaminoimidazole-succinocarboxamide synthase of Actinobacillus succinogenes (strain ATCC 55618 / DSM 22257 / CCUG 43843 / 130Z).